A 287-amino-acid polypeptide reads, in one-letter code: IQ domain-containing protein K (287 aa).

The chain is IQ domain-containing protein K (IQCK) from Homo sapiens (Human).